Here is a 428-residue protein sequence, read N- to C-terminus: Major capsid protein (428 aa).

The stretch at 4-24 (IEELRRQRAGINEQIQALATI) forms a coiled coil.

This sequence belongs to the HK97 phage major capsid protein family. The scaffolding domain delta is cleaved by the viral protease and lost after assembly.

It is found in the virion. Functionally, major capsid protein that assembles to form an icosahedral capsid. This Klebsiella oxytoca (Bacteriophage phiKO2) protein is Major capsid protein.